The sequence spans 143 residues: Putative cytokinin riboside 5'-monophosphate phosphoribohydrolase LOG9 (143 aa).

Residues 23–24 (RK), 41–47 (RYETMEE), and T53 contribute to the substrate site.

The protein belongs to the LOG family.

It catalyses the reaction N(6)-(dimethylallyl)adenosine 5'-phosphate + H2O = N(6)-dimethylallyladenine + D-ribose 5-phosphate. The enzyme catalyses 9-ribosyl-trans-zeatin 5'-phosphate + H2O = trans-zeatin + D-ribose 5-phosphate. Its function is as follows. Cytokinin-activating enzyme working in the direct activation pathway. Phosphoribohydrolase that converts inactive cytokinin nucleotides to the biologically active free-base forms. The chain is Putative cytokinin riboside 5'-monophosphate phosphoribohydrolase LOG9 (LOG9) from Arabidopsis thaliana (Mouse-ear cress).